A 712-amino-acid chain; its full sequence is Asp/Glu-specific dipeptidyl-peptidase (712 aa).

Residues 1–18 form the signal peptide; that stretch reads MKRFFKMALFLGVSALYG. Residues His84, Asp220, and Ser647 each act as charge relay system in the active site.

The protein belongs to the peptidase S46 family.

Catalyzes the removal of dipeptides from the N-terminus of oligopeptides. Shows a strict specificity for acidic residues (Asp or Glu) in the P1 position, and has probably a hydrophobic residue preference at the P2 position. Preferentially cleaves the synthetic substrate Leu-Asp-methylcoumaryl-7-amide (Leu-Asp-MCA) as compared to Leu-Glu-MCA. This is Asp/Glu-specific dipeptidyl-peptidase (dpp11) from Capnocytophaga gingivalis.